The following is a 254-amino-acid chain: Alcohol dehydrogenase (254 aa).

Position 10–33 (10–33 (FVAGLGGIGLDTSREIVKSGPKNL)) interacts with NAD(+). Residue S138 participates in substrate binding. The active-site Proton acceptor is Y151.

The protein belongs to the short-chain dehydrogenases/reductases (SDR) family. Homodimer.

The catalysed reaction is a primary alcohol + NAD(+) = an aldehyde + NADH + H(+). It carries out the reaction a secondary alcohol + NAD(+) = a ketone + NADH + H(+). This is Alcohol dehydrogenase (Adh) from Drosophila hawaiiensis (Fruit fly).